Reading from the N-terminus, the 533-residue chain is Light-independent protochlorophyllide reductase subunit B (533 aa).

Asp-36 contacts [4Fe-4S] cluster. Residue Asp-292 is the Proton donor of the active site. A substrate-binding site is contributed by 428-429 (GL).

This sequence belongs to the ChlB/BchB/BchZ family. In terms of assembly, protochlorophyllide reductase is composed of three subunits; BchL, BchN and BchB. Forms a heterotetramer of two BchB and two BchN subunits. The cofactor is [4Fe-4S] cluster.

The catalysed reaction is chlorophyllide a + oxidized 2[4Fe-4S]-[ferredoxin] + 2 ADP + 2 phosphate = protochlorophyllide a + reduced 2[4Fe-4S]-[ferredoxin] + 2 ATP + 2 H2O. It participates in porphyrin-containing compound metabolism; bacteriochlorophyll biosynthesis (light-independent). In terms of biological role, component of the dark-operative protochlorophyllide reductase (DPOR) that uses Mg-ATP and reduced ferredoxin to reduce ring D of protochlorophyllide (Pchlide) to form chlorophyllide a (Chlide). This reaction is light-independent. The NB-protein (BchN-BchB) is the catalytic component of the complex. The protein is Light-independent protochlorophyllide reductase subunit B of Prosthecochloris aestuarii (strain DSM 271 / SK 413).